The chain runs to 108 residues: UPF0102 protein Sden_0272 (108 aa).

Belongs to the UPF0102 family.

The protein is UPF0102 protein Sden_0272 of Shewanella denitrificans (strain OS217 / ATCC BAA-1090 / DSM 15013).